Reading from the N-terminus, the 338-residue chain is Phenylalanine--tRNA ligase alpha subunit (338 aa).

E259 lines the Mg(2+) pocket.

The protein belongs to the class-II aminoacyl-tRNA synthetase family. Phe-tRNA synthetase alpha subunit type 1 subfamily. As to quaternary structure, tetramer of two alpha and two beta subunits. Mg(2+) serves as cofactor.

It is found in the cytoplasm. The enzyme catalyses tRNA(Phe) + L-phenylalanine + ATP = L-phenylalanyl-tRNA(Phe) + AMP + diphosphate + H(+). The chain is Phenylalanine--tRNA ligase alpha subunit from Herminiimonas arsenicoxydans.